Reading from the N-terminus, the 240-residue chain is Uridylate kinase (240 aa).

An ATP-binding site is contributed by 13 to 16 (KASG). The involved in allosteric activation by GTP stretch occupies residues 21-26 (GGQGFG). G55 is a binding site for UMP. Residues G56 and R60 each coordinate ATP. Residues D75 and 136-143 (TGNPFFTT) contribute to the UMP site. ATP contacts are provided by T163, Q164, Y169, and D172.

This sequence belongs to the UMP kinase family. As to quaternary structure, homohexamer.

Its subcellular location is the cytoplasm. It carries out the reaction UMP + ATP = UDP + ADP. Its pathway is pyrimidine metabolism; CTP biosynthesis via de novo pathway; UDP from UMP (UMPK route): step 1/1. With respect to regulation, allosterically activated by GTP. Inhibited by UTP. Functionally, catalyzes the reversible phosphorylation of UMP to UDP. This chain is Uridylate kinase, found in Rhizobium johnstonii (strain DSM 114642 / LMG 32736 / 3841) (Rhizobium leguminosarum bv. viciae).